A 241-amino-acid chain; its full sequence is Adenosine 5'-phosphosulfate reductase (241 aa).

Residues cysteine 122, cysteine 123, cysteine 205, and cysteine 208 each contribute to the [4Fe-4S] cluster site. Cysteine 231 serves as the catalytic Nucleophile; cysteine thiosulfonate intermediate.

Belongs to the PAPS reductase family. CysH subfamily. It depends on [4Fe-4S] cluster as a cofactor.

The protein localises to the cytoplasm. The enzyme catalyses [thioredoxin]-disulfide + sulfite + AMP + 2 H(+) = adenosine 5'-phosphosulfate + [thioredoxin]-dithiol. It functions in the pathway sulfur metabolism; hydrogen sulfide biosynthesis; sulfite from sulfate. Its function is as follows. Catalyzes the formation of sulfite from adenosine 5'-phosphosulfate (APS) using thioredoxin as an electron donor. The chain is Adenosine 5'-phosphosulfate reductase from Shouchella clausii (strain KSM-K16) (Alkalihalobacillus clausii).